Here is a 385-residue protein sequence, read N- to C-terminus: Neuropeptide Y receptor type 2 (385 aa).

Topologically, residues 1–54 are extracellular; that stretch reads MGPLEAIGEENQTDEMKMELFTKLYLPRYTTPVSELALDPKPELKDSTTLVEVQ. N-linked (GlcNAc...) asparagine glycosylation occurs at Asn-11. Residues 55 to 75 form a helical membrane-spanning segment; the sequence is IILIFAYCSIILLGVIGNSLV. Residues 76–90 lie on the Cytoplasmic side of the membrane; the sequence is IHVIIKFKSMRTVTN. A helical transmembrane segment spans residues 91 to 111; it reads FFIANLAVADLLVNTLCLPFT. Residues 112–128 lie on the Extracellular side of the membrane; it reads LVYTLLGEWKLGPVLCH. Cysteines 127 and 207 form a disulfide. The chain crosses the membrane as a helical span at residues 129-149; sequence LVPYAQALAVHVSTVTLTVIA. At 150 to 169 the chain is on the cytoplasmic side; it reads LDRHRCIVYHLESKISKRIS. The chain crosses the membrane as a helical span at residues 170-190; sequence FLIIGVAWAVSALLASPLAIF. The Extracellular segment spans residues 191–221; it reads REYSLIEIIPDFKIVVCSEKWPGEGQLNYGT. The chain crosses the membrane as a helical span at residues 222–242; the sequence is IYSVSMLLIQYVLPLAIISYA. At 243–273 the chain is on the cytoplasmic side; sequence YTRIWTKLKNHVSPGAGNDHYHHRRQKTTKM. Residues 274–294 traverse the membrane as a helical segment; the sequence is LVCVVVVFAVSWLPFHAFQLV. The Extracellular segment spans residues 295-308; the sequence is SDIDSQVLDLKEYK. A helical transmembrane segment spans residues 309–329; the sequence is LIYTVFHVIAMCSTFANPLLY. Topologically, residues 330 to 385 are cytoplasmic; it reads GWMNNNYRTAFLTAFQCEQRLDSIHPEVSAAFKARKKLEAKKSQFPGDSFTQPTNV. Residue Cys-346 is the site of S-palmitoyl cysteine attachment.

This sequence belongs to the G-protein coupled receptor 1 family.

Its subcellular location is the cell membrane. Its function is as follows. Receptor for neuropeptide Y and peptide YY. In Gallus gallus (Chicken), this protein is Neuropeptide Y receptor type 2 (NPY2R).